Here is a 246-residue protein sequence, read N- to C-terminus: Large ribosomal subunit protein uL3 (246 aa).

2 disordered regions span residues 140 to 162 and 214 to 246; these read SHRSIGSTGGRQDPGKTFKNKKM and ADVPLPGKFRENGSAGASQIEAAPEAPASEENA. At Gln-151 the chain carries N5-methylglutamine. Over residues 234 to 246 the composition is skewed to low complexity; it reads EAAPEAPASEENA.

It belongs to the universal ribosomal protein uL3 family. In terms of assembly, part of the 50S ribosomal subunit. Forms a cluster with proteins L14 and L19. Post-translationally, methylated by PrmB.

One of the primary rRNA binding proteins, it binds directly near the 3'-end of the 23S rRNA, where it nucleates assembly of the 50S subunit. The polypeptide is Large ribosomal subunit protein uL3 (Methylorubrum extorquens (strain CM4 / NCIMB 13688) (Methylobacterium extorquens)).